A 167-amino-acid chain; its full sequence is I-Kappa-B like protein I1 (167 aa).

ANK repeat units lie at residues 54-86, 91-121, and 125-154; these read HGKQCVHIVSNPGIADPQEKLKLLMEWGADING, FGNTPLHIAAYTQNHKLATWLCNQPGINMGI, and LFKTPYYVACERHDIKIMNILRAKGGQCRI.

It belongs to the polydnaviridae I-Kappa-B-like protein family.

Its function is as follows. Suppresses the host immune response through NF-kappa-B inactivation. Possesses ankyrin repeat domains required for NF-kappa-B binding but lacks the regulatory regions required for dissociation from NF-kappa-B and degradation. Therefore, prevents host NF-kappa-B release and subsequent activation. The sequence is that of I-Kappa-B like protein I1 (I1) from Microplitis demolitor (Parasitoid wasp).